Consider the following 829-residue polypeptide: MAKEAASSPLEDLDLSGEEVQRLTSAFQDPEFRRMFSEYAEELTDPENRRRYEEEITALERERGVEVRFVHPEPGHVLRTSLDGTRRCFVNVCSNALVGAPSSQPGSGSAVSGRQWSLPYSLAPGREYAWGRGTRYTVYDVVFHPDAIALARRHERFRQMLDATALEAVEKQFGVKLDRRNAKTLKIKYKGTPDAAVLRTPLPGGAPARPEGEPESPFPDFPYPYRYPAAGASAAVPRPQAPSPPEAVRQPAPTEPRYSVVQRHHVDLQDYRCSRDSAPGTVPQELVVTIELPLLRSAEQAALEVTGKLLCLDSRKPDYRLRLSLPYPVDDSRGKAQFNKARRQLVVTLPVAPTASRPEPAASPEEAADPPGTDGAACASACRGEAGPAGVCAGDAISGPSRTRAADAGITTPDAPGKERVAKSEERDFGGQEISTTGTREEPPSGAGNSPGDRGGGALSTSWGDLDAGLSVGSASVRPTLGVEARETREGTGREPAYRAMGGPGTDRGEALCPPLQCSQDEESLTLLVQVPWILLQSLQGEVNPLWYKLSFSTQDLVYYSFFLQFTPENKLSTKEPEVSISSNNAVINLAKSPECHGYWREWYYGLNNYCLEERLFVNEDNVNEFLEEVLSPPFKQTLPLTPPLIEVLQVTDSKIEIHAKLQECSNSEQLHEKEERVHEGSPLTEKENTEHATISTTDSASSVAVTVLEADRCGSATCLQQGALDVSQKLFAESQQPKSEKEREFIKDKSAVYANERKDNLKEPVITEEKELDGNHPSSLLNKTAVRDTPGFDHIKETNMQDGSVQIIKDHVTHCSFSFQNNLLYDLD.

Disordered regions lie at residues 197–255, 349–377, 400–465, and 478–505; these read VLRT…APTE, LPVA…DGAA, PSRT…SWGD, and RPTL…GGPG. The segment covering 352-371 has biased composition (low complexity); sequence APTASRPEPAASPEEAADPP. The span at 416–430 shows a compositional bias: basic and acidic residues; sequence PGKERVAKSEERDFG. Ser-450 carries the post-translational modification Phosphoserine. The segment covering 484-497 has biased composition (basic and acidic residues); that stretch reads EARETREGTGREPA. The residue at position 632 (Ser-632) is a Phosphoserine. The interval 667-698 is disordered; it reads NSEQLHEKEERVHEGSPLTEKENTEHATISTT. Positions 670–691 are enriched in basic and acidic residues; that stretch reads QLHEKEERVHEGSPLTEKENTE.

This sequence belongs to the PIH1 family. Kintoun subfamily. Interacts with CFAP300. Interacts with DNAI2 and HSPA1A. Interacts with DNAAF4. Interacts with DNAAF6/PIH1D3.

The protein resides in the cytoplasm. It localises to the dynein axonemal particle. Its function is as follows. Required for cytoplasmic pre-assembly of axonemal dyneins, thereby playing a central role in motility in cilia and flagella. Involved in pre-assembly of dynein arm complexes in the cytoplasm before intraflagellar transport loads them for the ciliary compartment. The sequence is that of Protein kintoun from Bos taurus (Bovine).